The following is a 93-amino-acid chain: MKLLNFKIIIIQDVLCNNKDYKDNNYNNNKIERLTTSALSRSANRIPTTSSTSTSGTIPTTTITPRQSIINNRNQIINKPQKQHHLLVQIEIH.

Residues 41–62 are disordered; it reads RSANRIPTTSSTSTSGTIPTTT. Residues 46–62 show a composition bias toward low complexity; sequence IPTTSSTSTSGTIPTTT.

This is an uncharacterized protein from Dictyostelium discoideum (Social amoeba).